The primary structure comprises 428 residues: Tyrosine--tRNA ligase (428 aa).

Tyrosine 41 serves as a coordination point for L-tyrosine. Positions 46–55 (PTADSLHLGH) match the 'HIGH' region motif. Residues tyrosine 179 and glutamine 183 each coordinate L-tyrosine. The short motif at 239 to 243 (KFGKT) is the 'KMSKS' region element. Lysine 242 is an ATP binding site. In terms of domain architecture, S4 RNA-binding spans 361-418 (ADLMQALVDAELQPSRGQARKTIASNAVTINGEKQSDPEYIFNDEDRLFGRYTLLRRG).

The protein belongs to the class-I aminoacyl-tRNA synthetase family. TyrS type 1 subfamily. In terms of assembly, homodimer.

The protein resides in the cytoplasm. It carries out the reaction tRNA(Tyr) + L-tyrosine + ATP = L-tyrosyl-tRNA(Tyr) + AMP + diphosphate + H(+). In terms of biological role, catalyzes the attachment of tyrosine to tRNA(Tyr) in a two-step reaction: tyrosine is first activated by ATP to form Tyr-AMP and then transferred to the acceptor end of tRNA(Tyr). This Salmonella paratyphi C (strain RKS4594) protein is Tyrosine--tRNA ligase.